Here is a 27-residue protein sequence, read N- to C-terminus: Cruzioseptin-14 (27 aa).

Expressed by the skin glands.

It localises to the secreted. Functionally, has antimicrobial activity. The chain is Cruzioseptin-14 from Cruziohyla calcarifer (Splendid leaf frog).